We begin with the raw amino-acid sequence, 440 residues long: Thymidine phosphorylase (440 aa).

This sequence belongs to the thymidine/pyrimidine-nucleoside phosphorylase family. Homodimer.

The enzyme catalyses thymidine + phosphate = 2-deoxy-alpha-D-ribose 1-phosphate + thymine. It participates in pyrimidine metabolism; dTMP biosynthesis via salvage pathway; dTMP from thymine: step 1/2. In terms of biological role, the enzymes which catalyze the reversible phosphorolysis of pyrimidine nucleosides are involved in the degradation of these compounds and in their utilization as carbon and energy sources, or in the rescue of pyrimidine bases for nucleotide synthesis. The protein is Thymidine phosphorylase of Salmonella schwarzengrund (strain CVM19633).